The primary structure comprises 584 residues: NADPH-dependent diflavin oxidoreductase 1 (584 aa).

A Flavodoxin-like domain is found at Ile6–Tyr150. Residues Ser12–Ala17, Ser59–Gly62, Cys97–Asn106, and Glu132 contribute to the FMN site. Residues Arg199 to Gln436 enclose the FAD-binding FR-type domain. FAD-binding positions include Arg343, Arg373–Ser376, and Gly407–Ser410. Residues Thr448, Ser503–Arg504, and Lys509–Gln513 each bind NADP(+). An FAD-binding site is contributed by Trp584.

This sequence belongs to the NADPH-dependent diflavin oxidoreductase NDOR1 family. In the N-terminal section; belongs to the flavodoxin family. The protein in the C-terminal section; belongs to the flavoprotein pyridine nucleotide cytochrome reductase family. As to quaternary structure, interacts with dre2; as part of the cytosolic iron-sulfur (Fe-S) protein assembly (CIA) machinery. It depends on FAD as a cofactor. FMN serves as cofactor.

The protein resides in the cytoplasm. Its subcellular location is the mitochondrion. The enzyme catalyses 2 oxidized [2Fe-2S]-[protein] + NADPH = 2 reduced [2Fe-2S]-[protein] + NADP(+) + H(+). In terms of biological role, NADPH-dependent reductase which is a central component of the cytosolic iron-sulfur (Fe-S) protein assembly (CIA) machinery. Transfers electrons from NADPH via its FAD and FMN prosthetic groups to the [2Fe-2S] cluster of dre2, another key component of the CIA machinery. In turn, this reduced cluster provides electrons for assembly of cytosolic iron-sulfur cluster proteins. Positively controls H(2)O(2)-induced cell death. The protein is NADPH-dependent diflavin oxidoreductase 1 of Schizosaccharomyces pombe (strain 972 / ATCC 24843) (Fission yeast).